We begin with the raw amino-acid sequence, 77 residues long: MQKLTILLLVAAVLMSTQALIKGGGEKRPKEKIKFLSKRKTTAESWWEGECSGWSVYCTQHSECCSGECTGNYCELF.

The first 19 residues, 1-19 (MQKLTILLLVAAVLMSTQA), serve as a signal peptide directing secretion. A propeptide spanning residues 20-37 (LIKGGGEKRPKEKIKFLS) is cleaved from the precursor. Disulfide bonds link C51–C65, C58–C69, and C64–C74.

It belongs to the conotoxin O2 superfamily. As to expression, expressed by the venom duct.

It localises to the secreted. The sequence is that of Conotoxin VnMEKL-0223 from Conus ventricosus (Mediterranean cone).